The following is a 280-amino-acid chain: Phosphatidylglycerol--prolipoprotein diacylglyceryl transferase (280 aa).

4 helical membrane-spanning segments follow: residues Phe-12–Leu-32, Leu-52–Glu-72, Ile-86–Leu-106, and Phe-115–Gly-133. Residue Arg-134 participates in a 1,2-diacyl-sn-glycero-3-phospho-(1'-sn-glycerol) binding. 3 helical membrane passes run Pro-173–Phe-193, Leu-203–Ile-223, and Ile-246–Tyr-266.

Belongs to the Lgt family.

It is found in the cell inner membrane. It catalyses the reaction L-cysteinyl-[prolipoprotein] + a 1,2-diacyl-sn-glycero-3-phospho-(1'-sn-glycerol) = an S-1,2-diacyl-sn-glyceryl-L-cysteinyl-[prolipoprotein] + sn-glycerol 1-phosphate + H(+). It functions in the pathway protein modification; lipoprotein biosynthesis (diacylglyceryl transfer). Catalyzes the transfer of the diacylglyceryl group from phosphatidylglycerol to the sulfhydryl group of the N-terminal cysteine of a prolipoprotein, the first step in the formation of mature lipoproteins. This chain is Phosphatidylglycerol--prolipoprotein diacylglyceryl transferase, found in Synechococcus sp. (strain CC9902).